The primary structure comprises 354 residues: NADH-quinone oxidoreductase subunit H (354 aa).

A run of 8 helical transmembrane segments spans residues 25 to 45 (LVRILVVAVVILLCVAYLILW), 91 to 111 (WIYMVAPIMVVVPAFAVWAVI), 126 to 146 (LLYAMAVSSIGVYGVILAGWA), 170 to 190 (MGFALVVVLMTAGTLNLSGIV), 205 to 225 (FLSWNWLPLLPMFVVYFISGI), 267 to 287 (IVISALAATLFLGGWSAPFGF), 290 to 310 (FIPGIVWLVAKVFFLLSVFIW), and 330 to 350 (IFIPVCVVWLVVVGFWIMSPL).

This sequence belongs to the complex I subunit 1 family. As to quaternary structure, NDH-1 is composed of 14 different subunits. Subunits NuoA, H, J, K, L, M, N constitute the membrane sector of the complex.

The protein localises to the cell inner membrane. It catalyses the reaction a quinone + NADH + 5 H(+)(in) = a quinol + NAD(+) + 4 H(+)(out). Functionally, NDH-1 shuttles electrons from NADH, via FMN and iron-sulfur (Fe-S) centers, to quinones in the respiratory chain. The immediate electron acceptor for the enzyme in this species is believed to be ubiquinone. Couples the redox reaction to proton translocation (for every two electrons transferred, four hydrogen ions are translocated across the cytoplasmic membrane), and thus conserves the redox energy in a proton gradient. This subunit may bind ubiquinone. The polypeptide is NADH-quinone oxidoreductase subunit H (Paraburkholderia xenovorans (strain LB400)).